Reading from the N-terminus, the 896-residue chain is Zinc finger protein 574 (896 aa).

2 C2H2-type zinc fingers span residues 16–38 and 76–98; these read YVCS…QNSH and YQCL…QELH. S113 is subject to Phosphoserine. The C2H2-type 3 zinc finger occupies 126 to 148; sequence YECVDCKALFASQELWLNHRQTH. S164 is subject to Phosphoserine. The segment at 214–236 adopts a C2H2-type 4 zinc-finger fold; the sequence is YKCSECSQLFQLPADFLEHQATH. Residues 239 to 301 form a disordered region; the sequence is APVPESQEPA…RARRNNSGEA (63 aa). The segment covering 247–257 has biased composition (polar residues); that stretch reads PALQQEVQASS. A compositionally biased stretch (basic and acidic residues) spans 274-287; that stretch reads HSYELRNGEAIGRD. Phosphoserine is present on S298. 4 C2H2-type zinc fingers span residues 309–331, 336–358, 364–386, and 392–413; these read LFCS…LRSH, FKCP…LGDH, FLCV…RRAH, and HSCP…RRTH. A disordered region spans residues 434-460; it reads FPEPAPAETGEPEAPEPPVSEETSAGP. The C2H2-type 9 zinc finger occupies 466 to 489; that stretch reads YRCLLCSREFGKALQLTRHQRFVH. The C2H2-type 10; degenerate zinc finger occupies 495-517; that stretch reads HKCSICGKMFKKKSHVRNHLRTH. 4 consecutive C2H2-type zinc fingers follow at residues 523-545, 551-573, 579-601, and 607-630; these read FPCP…RLTH, YRCG…RLVH, YRCQ…RYHH, and YKCR…LVVH. The C2H2-type 15; degenerate zinc-finger motif lies at 636-659; that stretch reads HRCPSCGAAFPSSLRLREHRCAAA. The C2H2-type 16 zinc-finger motif lies at 667–689; the sequence is FECGTCGKKVGSAARLQAHEAAH. The segment at 687–733 is disordered; it reads AAHAAAGPGEVLAKEPPAPRAPRATRAPVASPAALGSTATASPAAPA. The segment covering 707–732 has biased composition (low complexity); it reads APRATRAPVASPAALGSTATASPAAP. A Phosphoserine modification is found at S717. Residue T724 is modified to Phosphothreonine. Residue S728 is modified to Phosphoserine. C2H2-type zinc fingers lie at residues 738-760, 766-788, 794-816, and 822-844; these read LECS…RRIH, YPCP…RRLH, FACE…RRIH, and YSCP…RKTH. R832 carries the post-translational modification Asymmetric dimethylarginine.

Belongs to the krueppel C2H2-type zinc-finger protein family.

The protein resides in the nucleus. Its function is as follows. May be involved in transcriptional regulation. This is Zinc finger protein 574 (ZNF574) from Homo sapiens (Human).